Reading from the N-terminus, the 45-residue chain is Alpha-conotoxin-like Lp1.10 (45 aa).

The propeptide occupies 1-27; that stretch reads VVLGPASDGRNAAANVKAPDLIALTVR. Cystine bridges form between Cys30-Cys36 and Cys31-Cys44. The segment at 32 to 34 is lacks the Ser-Xaa-Pro motif that is crucial for potent interaction with nAChR; the sequence is HNA. The residue at position 44 (Cys44) is a Cysteine amide.

Belongs to the conotoxin A superfamily. Expressed by the venom duct.

The protein resides in the secreted. Functionally, alpha-conotoxins act on postsynaptic membranes, they bind to the nicotinic acetylcholine receptors (nAChR) and thus inhibit them. Has possibly a distinct nAChR binding mode from other alpha-conotoxins, due to a different three residue motif (lacks the Ser-Xaa-Pro motif). In Conus leopardus (Leopard cone), this protein is Alpha-conotoxin-like Lp1.10.